We begin with the raw amino-acid sequence, 370 residues long: Queuine tRNA-ribosyltransferase (370 aa).

Asp-89 functions as the Proton acceptor in the catalytic mechanism. Residues 89 to 93 (DSGGF), Asp-143, Gln-187, and Gly-214 contribute to the substrate site. An RNA binding region spans residues 245–251 (GVGKPEN). The active-site Nucleophile is Asp-264. An RNA binding; important for wobble base 34 recognition region spans residues 269-273 (TRNAR). Zn(2+) contacts are provided by Cys-302, Cys-304, Cys-307, and His-333.

Belongs to the queuine tRNA-ribosyltransferase family. Homodimer. Within each dimer, one monomer is responsible for RNA recognition and catalysis, while the other monomer binds to the replacement base PreQ1. Requires Zn(2+) as cofactor.

It catalyses the reaction 7-aminomethyl-7-carbaguanine + guanosine(34) in tRNA = 7-aminomethyl-7-carbaguanosine(34) in tRNA + guanine. The protein operates within tRNA modification; tRNA-queuosine biosynthesis. Its function is as follows. Catalyzes the base-exchange of a guanine (G) residue with the queuine precursor 7-aminomethyl-7-deazaguanine (PreQ1) at position 34 (anticodon wobble position) in tRNAs with GU(N) anticodons (tRNA-Asp, -Asn, -His and -Tyr). Catalysis occurs through a double-displacement mechanism. The nucleophile active site attacks the C1' of nucleotide 34 to detach the guanine base from the RNA, forming a covalent enzyme-RNA intermediate. The proton acceptor active site deprotonates the incoming PreQ1, allowing a nucleophilic attack on the C1' of the ribose to form the product. After dissociation, two additional enzymatic reactions on the tRNA convert PreQ1 to queuine (Q), resulting in the hypermodified nucleoside queuosine (7-(((4,5-cis-dihydroxy-2-cyclopenten-1-yl)amino)methyl)-7-deazaguanosine). The sequence is that of Queuine tRNA-ribosyltransferase from Hamiltonella defensa subsp. Acyrthosiphon pisum (strain 5AT).